The sequence spans 89 residues: Phasin PhaP (89 aa).

Helix stretches follow at residues 3-26 and 39-83; these read TQFF…TWME and DTFE…ALRQ.

Homotetramer.

The protein localises to the cellular thylakoid membrane. It is found in the cytoplasm. It functions in the pathway biopolymer metabolism; poly-(R)-3-hydroxybutanoate biosynthesis. Its function is as follows. A phasin, it attaches to the polyhydroxybutyrate (PHB) granule surface regulating the number and size of PHB granules within a cell. It probably also acts as a regulator affecting the biosynthetic activity of PHB synthase in vivo. The polypeptide is Phasin PhaP (Synechocystis sp. (strain ATCC 27184 / PCC 6803 / Kazusa)).